Consider the following 569-residue polypeptide: CTP synthase (569 aa).

The segment at Met1–Ile272 is amidoligase domain. Position 18 (Ser18) interacts with CTP. Residue Ser18 coordinates UTP. Ser19–Ile24 contributes to the ATP binding site. Tyr59 lines the L-glutamine pocket. Asp76 contacts ATP. Mg(2+) contacts are provided by Asp76 and Glu146. CTP-binding positions include Asp153–Glu155, Lys193–Gln198, and Lys229. Residues Lys193–Gln198 and Lys229 each bind UTP. A Glutamine amidotransferase type-1 domain is found at Thr299–Gly543. Residue Gly363 participates in L-glutamine binding. Cys390 serves as the catalytic Nucleophile; for glutamine hydrolysis. L-glutamine-binding positions include Leu391–Gln394, Glu414, and Arg471. Active-site residues include His516 and Glu518.

This sequence belongs to the CTP synthase family. As to quaternary structure, homotetramer.

The enzyme catalyses UTP + L-glutamine + ATP + H2O = CTP + L-glutamate + ADP + phosphate + 2 H(+). It carries out the reaction L-glutamine + H2O = L-glutamate + NH4(+). The catalysed reaction is UTP + NH4(+) + ATP = CTP + ADP + phosphate + 2 H(+). Its pathway is pyrimidine metabolism; CTP biosynthesis via de novo pathway; CTP from UDP: step 2/2. Its activity is regulated as follows. Allosterically activated by GTP, when glutamine is the substrate; GTP has no effect on the reaction when ammonia is the substrate. The allosteric effector GTP functions by stabilizing the protein conformation that binds the tetrahedral intermediate(s) formed during glutamine hydrolysis. Inhibited by the product CTP, via allosteric rather than competitive inhibition. In terms of biological role, catalyzes the ATP-dependent amination of UTP to CTP with either L-glutamine or ammonia as the source of nitrogen. Regulates intracellular CTP levels through interactions with the four ribonucleotide triphosphates. This Chlorobium chlorochromatii (strain CaD3) protein is CTP synthase.